The primary structure comprises 259 residues: MNLLEKTRKINAMLQKAAGRPVNFKEMAETLCEVIEANVFVVSRRGKLLGFAIKQSIENERMKRMLEERQFPEEYTKNLFNITETSPNIDINSEYTAFPVENRDLFKTGLTTIVPINGGGERLGTLILSRLDREFDNDDLILAEYGATVVGMEILREKAEEIEEEARSKAVVQMAISSLSYSELEAIEHIFEELDGTEGLLVASKIADRVGITRSVIVNALRKLESAGVIESRSLGMKGTYIKVLNDKFLSELEKLKSS.

Residues 1–155 (MNLLEKTRKI…GATVVGMEIL (155 aa)) are GAF domain. A DNA-binding region (H-T-H motif) is located at residues 203–222 (ASKIADRVGITRSVIVNALR). A Phosphoserine modification is found at Ser215.

It belongs to the CodY family.

The protein resides in the cytoplasm. DNA-binding global transcriptional regulator which is involved in the adaptive response to starvation and acts by directly or indirectly controlling the expression of numerous genes in response to nutrient availability. During rapid exponential growth, CodY is highly active and represses genes whose products allow adaptation to nutrient depletion. The polypeptide is Global transcriptional regulator CodY (Geobacillus kaustophilus (strain HTA426)).